Here is a 53-residue protein sequence, read N- to C-terminus: uncharacterized protein (53 aa).

An N-terminal signal peptide occupies residues 1 to 19; it reads MKLLTILILFYSFFMNLQA.

This is an uncharacterized protein from Autographa californica nuclear polyhedrosis virus (AcMNPV).